We begin with the raw amino-acid sequence, 108 residues long: ADM5 (108 aa).

The first 18 residues, Met1–Asp18, serve as a signal peptide directing secretion. Positions Pro19–Leu25 are excised as a propeptide. Cysteines 38 and 43 form a disulfide. A disordered region spans residues Lys61 to Gly108. The residue at position 77 (Tyr77) is a Tyrosine amide. A compositionally biased stretch (basic residues) spans Gly78–Glu89. A propeptide spanning residues Glu89–Gly108 is cleaved from the precursor. The span at Ala90–Leu101 shows a compositional bias: basic and acidic residues.

The protein belongs to the adrenomedullin family. Expressed abundantly in the spleen and thymus. Also expressed in adrenal and pituitary. Not expressed in brain, heart, kidney, liver and stomach.

It is found in the secreted. In terms of biological role, seems to have a peripheral vasodepressor effect and a central vasopressor effect. This chain is ADM5 (ADM5), found in Sus scrofa (Pig).